A 322-amino-acid polypeptide reads, in one-letter code: Quinolinate synthase (322 aa).

Iminosuccinate contacts are provided by His38 and Ser55. Residue Cys100 coordinates [4Fe-4S] cluster. Residues 126–128 (YIN) and Ser143 each bind iminosuccinate. Cys186 serves as a coordination point for [4Fe-4S] cluster. Residues 212-214 (HPE) and Thr229 contribute to the iminosuccinate site. Cys279 contacts [4Fe-4S] cluster.

This sequence belongs to the quinolinate synthase family. Type 2 subfamily. [4Fe-4S] cluster serves as cofactor.

Its subcellular location is the cytoplasm. It carries out the reaction iminosuccinate + dihydroxyacetone phosphate = quinolinate + phosphate + 2 H2O + H(+). The protein operates within cofactor biosynthesis; NAD(+) biosynthesis; quinolinate from iminoaspartate: step 1/1. Functionally, catalyzes the condensation of iminoaspartate with dihydroxyacetone phosphate to form quinolinate. This is Quinolinate synthase from Aquifex aeolicus (strain VF5).